The following is a 158-amino-acid chain: GTP-dependent dephospho-CoA kinase (158 aa).

6 residues coordinate GTP: D35, V36, D54, K56, E109, and D132.

The protein belongs to the GTP-dependent DPCK family.

It catalyses the reaction 3'-dephospho-CoA + GTP = GDP + CoA + H(+). It participates in cofactor biosynthesis; coenzyme A biosynthesis. Functionally, catalyzes the GTP-dependent phosphorylation of the 3'-hydroxyl group of dephosphocoenzyme A to form coenzyme A (CoA). This is GTP-dependent dephospho-CoA kinase from Methanococcus maripaludis (strain DSM 14266 / JCM 13030 / NBRC 101832 / S2 / LL).